We begin with the raw amino-acid sequence, 141 residues long: Large ribosomal subunit protein uL11 (141 aa).

The protein belongs to the universal ribosomal protein uL11 family. As to quaternary structure, part of the ribosomal stalk of the 50S ribosomal subunit. Interacts with L10 and the large rRNA to form the base of the stalk. L10 forms an elongated spine to which L12 dimers bind in a sequential fashion forming a multimeric L10(L12)X complex. Post-translationally, one or more lysine residues are methylated.

In terms of biological role, forms part of the ribosomal stalk which helps the ribosome interact with GTP-bound translation factors. The polypeptide is Large ribosomal subunit protein uL11 (Synechococcus sp. (strain JA-3-3Ab) (Cyanobacteria bacterium Yellowstone A-Prime)).